Here is a 342-residue protein sequence, read N- to C-terminus: Phosphate acyltransferase (342 aa).

It belongs to the PlsX family. In terms of assembly, homodimer. Probably interacts with PlsY.

It is found in the cytoplasm. It catalyses the reaction a fatty acyl-[ACP] + phosphate = an acyl phosphate + holo-[ACP]. It participates in lipid metabolism; phospholipid metabolism. Its function is as follows. Catalyzes the reversible formation of acyl-phosphate (acyl-PO(4)) from acyl-[acyl-carrier-protein] (acyl-ACP). This enzyme utilizes acyl-ACP as fatty acyl donor, but not acyl-CoA. This is Phosphate acyltransferase from Actinobacillus succinogenes (strain ATCC 55618 / DSM 22257 / CCUG 43843 / 130Z).